Consider the following 387-residue polypeptide: Probable WRKY transcription factor 36 (387 aa).

Residues 197-264 constitute a DNA-binding region (WRKY); sequence CEDPSINDGC…YEGNHDHPLP (68 aa). The disordered stretch occupies residues 322-366; it reads RPNYPNQLPDDYPLSSSSFSLNFSSPDPPPPSSHDHTLNFSGLRT. Over residues 329 to 346 the composition is skewed to low complexity; sequence LPDDYPLSSSSFSLNFSS.

Its subcellular location is the nucleus. Transcription factor. Interacts specifically with the W box (5'-(T)TGAC[CT]-3'), a frequently occurring elicitor-responsive cis-acting element. This is Probable WRKY transcription factor 36 (WRKY36) from Arabidopsis thaliana (Mouse-ear cress).